The primary structure comprises 510 residues: NAD(P)H-quinone oxidoreductase subunit 2 B, chloroplastic (510 aa).

13 consecutive transmembrane segments (helical) span residues Leu24–Leu44, Ile57–Phe77, Ile99–Ile119, Met124–Cys144, Leu149–Tyr169, Tyr183–Gly203, Pro227–Ala247, Trp295–Ile315, Met323–Asp343, Tyr354–Leu374, Ala395–Phe415, Leu418–Leu438, and Met484–Ile504.

It belongs to the complex I subunit 2 family. In terms of assembly, NDH is composed of at least 16 different subunits, 5 of which are encoded in the nucleus.

Its subcellular location is the plastid. It is found in the chloroplast thylakoid membrane. The enzyme catalyses a plastoquinone + NADH + (n+1) H(+)(in) = a plastoquinol + NAD(+) + n H(+)(out). The catalysed reaction is a plastoquinone + NADPH + (n+1) H(+)(in) = a plastoquinol + NADP(+) + n H(+)(out). Functionally, NDH shuttles electrons from NAD(P)H:plastoquinone, via FMN and iron-sulfur (Fe-S) centers, to quinones in the photosynthetic chain and possibly in a chloroplast respiratory chain. The immediate electron acceptor for the enzyme in this species is believed to be plastoquinone. Couples the redox reaction to proton translocation, and thus conserves the redox energy in a proton gradient. The polypeptide is NAD(P)H-quinone oxidoreductase subunit 2 B, chloroplastic (Guizotia abyssinica (Niger)).